Here is a 206-residue protein sequence, read N- to C-terminus: Large ribosomal subunit protein eL13z (206 aa).

Residues 185 to 206 (TNKRHAGARAKRAAEAEKEEKK) form a disordered region. A compositionally biased stretch (basic residues) spans 186-195 (NKRHAGARAK). Basic and acidic residues predominate over residues 196–206 (RAAEAEKEEKK).

The protein belongs to the eukaryotic ribosomal protein eL13 family.

It is found in the cytoplasm. In Arabidopsis thaliana (Mouse-ear cress), this protein is Large ribosomal subunit protein eL13z (RPL13B).